The chain runs to 285 residues: Phospholipid phosphatase 1 (285 aa).

At 1-6 (MFDKAR) the chain is on the cytoplasmic side. Residues 5-7 (ARL) carry the PDZ-binding; involved in localization to the apical cell membrane motif. The helical transmembrane segment at 7-27 (LPYVALDVLCVVLAGLPFAIL) threads the bilayer. Residues 28-53 (TSRHTPFQRGIFCNDESIKYPYKEDT) are Extracellular-facing. A helical transmembrane segment spans residues 54–74 (IPYALLGGIMIPFSIVVMIIG). The Cytoplasmic segment spans residues 75-94 (ETLSVYCNLLHSNSFIRNNY). A helical membrane pass occupies residues 95–115 (IATIYKSIGTFLFGAAASQSL). At 116 to 165 (TDIAKYSIGRLRPHFLSVCDPDWSKVNCSDGYIEYYVCRGNAEKVKEGRL) the chain is on the extracellular side. The tract at residues 120 to 128 (KYSIGRLRP) is phosphatase sequence motif I. Residue Asn142 is glycosylated (N-linked (GlcNAc...) asparagine). Residues 166–186 (SFYSGHSSFSMYCMVFVALYL) form a helical membrane-spanning segment. The segment at 168–171 (YSGH) is phosphatase sequence motif II. His171 functions as the Proton donors in the catalytic mechanism. The Cytoplasmic portion of the chain corresponds to 187 to 199 (QARMKGDWARLLR). A helical transmembrane segment spans residues 200 to 220 (PTLQFGLVAASIYVGLSRISD). The phosphatase sequence motif III stretch occupies residues 216–227 (SRISDYKHHWSD). Over 221–229 (YKHHWSDVL) the chain is Extracellular. His223 serves as the catalytic Nucleophile. Residues 230–250 (TGLIQGAIVAILVAVYVSDFF) form a helical membrane-spanning segment. Residues 251-285 (KARNSPFQERKEEDSHTTLHETPTAGNHYRSNHQP) lie on the Cytoplasmic side of the membrane. Basic and acidic residues predominate over residues 260-269 (RKEEDSHTTL). Residues 260-285 (RKEEDSHTTLHETPTAGNHYRSNHQP) are disordered.

The protein belongs to the PA-phosphatase related phosphoesterase family. Forms functional homodimers and homooligomers that are not required for substrate recognition and catalytic activity. Can also form heterooligomers with PLPP2 and PLPP3. Post-translationally, N-glycosylated. N-linked sugars are of the complex type. N-glycosylation is not required for the phosphatase activity.

Its subcellular location is the cell membrane. The protein localises to the apical cell membrane. It localises to the membrane raft. The protein resides in the membrane. It is found in the caveola. The enzyme catalyses a 1,2-diacyl-sn-glycero-3-phosphate + H2O = a 1,2-diacyl-sn-glycerol + phosphate. The catalysed reaction is 1,2-dihexadecanoyl-sn-glycero-3-phosphate + H2O = 1,2-dihexadecanoyl-sn-glycerol + phosphate. It carries out the reaction 1,2-di-(9Z-octadecenoyl)-sn-glycero-3-phosphate + H2O = 1,2-di-(9Z-octadecenoyl)-sn-glycerol + phosphate. It catalyses the reaction a monoacyl-sn-glycero-3-phosphate + H2O = a monoacylglycerol + phosphate. The enzyme catalyses (9Z)-octadecenoyl-sn-glycero-3-phosphate + H2O = (9Z-octadecenoyl)-glycerol + phosphate. The catalysed reaction is a 1-acyl-sn-glycero-3-phosphate + H2O = a 1-acyl-sn-glycerol + phosphate. It carries out the reaction 1-(9Z-octadecenoyl)-sn-glycero-3-phosphate + H2O = 1-(9Z-octadecenoyl)-sn-glycerol + phosphate. It catalyses the reaction a 1,2-diacyl-sn-glycerol 3-diphosphate + H2O = a 1,2-diacyl-sn-glycero-3-phosphate + phosphate + H(+). The enzyme catalyses sphing-4-enine 1-phosphate + H2O = sphing-4-enine + phosphate. The catalysed reaction is an N-acylsphing-4-enine 1-phosphate + H2O = an N-acylsphing-4-enine + phosphate. It carries out the reaction N-(octanoyl)-sphing-4-enine-1-phosphate + H2O = N-octanoylsphing-4-enine + phosphate. It catalyses the reaction N-(9Z-octadecenoyl)-ethanolamine phosphate + H2O = N-(9Z-octadecenoyl) ethanolamine + phosphate. The enzyme catalyses 1-hexadecanoyl-2-(9Z-octadecenoyl)-sn-glycero-3-phosphate + H2O = 1-hexadecanoyl-2-(9Z-octadecenoyl)-sn-glycerol + phosphate. It participates in lipid metabolism; phospholipid metabolism. Its activity is regulated as follows. Magnesium-independent phospholipid phosphatase. Insensitive to N-ethylmaleimide. In terms of biological role, magnesium-independent phospholipid phosphatase of the plasma membrane that catalyzes the dephosphorylation of a variety of glycerolipid and sphingolipid phosphate esters including phosphatidate/PA, lysophosphatidate/LPA, diacylglycerol pyrophosphate/DGPP, sphingosine 1-phosphate/S1P and ceramide 1-phosphate/C1P. Also acts on N-oleoyl ethanolamine phosphate/N-(9Z-octadecenoyl)-ethanolamine phosphate, a potential physiological compound. Through its extracellular phosphatase activity allows both the hydrolysis and the cellular uptake of these bioactive lipid mediators from the milieu, regulating signal transduction in different cellular processes. It is for instance essential for the extracellular hydrolysis of S1P and subsequent conversion into intracellular S1P. Involved in the regulation of inflammation, platelets activation, cell proliferation and migration among other processes. May also have an intracellular activity to regulate phospholipid-mediated signaling pathways. The polypeptide is Phospholipid phosphatase 1 (Cavia porcellus (Guinea pig)).